We begin with the raw amino-acid sequence, 416 residues long: Gamma-glutamyl phosphate reductase (416 aa).

The protein belongs to the gamma-glutamyl phosphate reductase family.

Its subcellular location is the cytoplasm. It catalyses the reaction L-glutamate 5-semialdehyde + phosphate + NADP(+) = L-glutamyl 5-phosphate + NADPH + H(+). It functions in the pathway amino-acid biosynthesis; L-proline biosynthesis; L-glutamate 5-semialdehyde from L-glutamate: step 2/2. In terms of biological role, catalyzes the NADPH-dependent reduction of L-glutamate 5-phosphate into L-glutamate 5-semialdehyde and phosphate. The product spontaneously undergoes cyclization to form 1-pyrroline-5-carboxylate. The polypeptide is Gamma-glutamyl phosphate reductase (Salmonella newport (strain SL254)).